We begin with the raw amino-acid sequence, 234 residues long: 7-carboxy-7-deazaguanine synthase (234 aa).

The tract at residues 1–28 is disordered; it reads MPLNCDTKTAGEISSSIPSGSGSHQPAA. Residues 13-23 are compositionally biased toward low complexity; the sequence is ISSSIPSGSGS. Substrate contacts are provided by residues 42–44 and Arg57; that span reads LQG. One can recognise a Radical SAM core domain in the interval 48–234; sequence TSGYPTIFIR…LQLHKFIGLP (187 aa). 3 residues coordinate [4Fe-4S] cluster: Cys61, Cys65, and Cys68. Position 70 (Thr70) interacts with Mg(2+). Thr100 provides a ligand contact to substrate. Gly102 is an S-adenosyl-L-methionine binding site. Pro234 contributes to the substrate binding site.

Belongs to the radical SAM superfamily. 7-carboxy-7-deazaguanine synthase family. In terms of assembly, homodimer. [4Fe-4S] cluster serves as cofactor. The cofactor is S-adenosyl-L-methionine. Mg(2+) is required as a cofactor.

It catalyses the reaction 6-carboxy-5,6,7,8-tetrahydropterin + H(+) = 7-carboxy-7-deazaguanine + NH4(+). Its pathway is purine metabolism; 7-cyano-7-deazaguanine biosynthesis. Functionally, catalyzes the complex heterocyclic radical-mediated conversion of 6-carboxy-5,6,7,8-tetrahydropterin (CPH4) to 7-carboxy-7-deazaguanine (CDG), a step common to the biosynthetic pathways of all 7-deazapurine-containing compounds. The chain is 7-carboxy-7-deazaguanine synthase from Methanospirillum hungatei JF-1 (strain ATCC 27890 / DSM 864 / NBRC 100397 / JF-1).